The sequence spans 192 residues: MGSCECPALLLLLSLLLLPLGLPVLGAPPRLICDSRVLERYILGAREAENVTMGCAEGCSFSENITVPDTKVNFYTWKRMDVGQQAVEVWQGLALLSEAILRGQALLANSSQPSETLQLHVDKAVSSLRSLTSLLRALGAQKEATSLPEATSAAPLRTFTVDTLCKLFRIYSNFLRGKLTLYTGEACRRGDR.

The first 26 residues, 1–26 (MGSCECPALLLLLSLLLLPLGLPVLG), serve as a signal peptide directing secretion. 2 disulfides stabilise this stretch: cysteine 33-cysteine 187 and cysteine 55-cysteine 59. A glycan (N-linked (GlcNAc...) asparagine) is linked at asparagine 50. Asparagine 64 and asparagine 109 each carry an N-linked (GlcNAc...) asparagine glycan.

This sequence belongs to the EPO/TPO family. Produced by kidney or liver of adult mammals and by liver of fetal or neonatal mammals.

It localises to the secreted. Hormone involved in the regulation of erythrocyte proliferation and differentiation and the maintenance of a physiological level of circulating erythrocyte mass. Binds to EPOR leading to EPOR dimerization and JAK2 activation thereby activating specific downstream effectors, including STAT1 and STAT3. In Felis catus (Cat), this protein is Erythropoietin (EPO).